A 72-amino-acid polypeptide reads, in one-letter code: Crustacean hyperglycemic hormone (72 aa).

Disulfide bonds link Cys-7-Cys-43, Cys-23-Cys-39, and Cys-26-Cys-52. Val-72 is modified (valine amide).

It localises to the secreted. In terms of biological role, hormone found in the sinus gland of isopods and decapods which controls the blood sugar level. Has a secretagogue action over the amylase released from the midgut gland. May act as a stress hormone and may be involved in the control of molting and reproduction. This Penaeus schmitti (White shrimp) protein is Crustacean hyperglycemic hormone.